Consider the following 455-residue polypeptide: MAANVPPSAETLLSGAAAHPPKTAEEIANQYNLLPKLIPYLDRHLVFPLLEFSSGQDDEKEVVRAKYELLKHTNMTDYVANLWKEINNSDDIPDEFVKKREEVLAKLQQYEEESAKITQLLQDESVVANLRSDKVANLKFLEEQHGVTIEMVNSLYDYGRFQYSCGSYGNAAELLYQFRVLSTDNDKVASATWGKFASEILTTSWEAAMEEVQKVKDSIETRLFNNPLGQLQNRSWLIHWSLFPFFNHDPARDVLTDLFFSPAYINTIQTNCPWILRYLAAAVITNRNRAHKSSSVYQKQLKDLIRVVRQEGYEYNDPITDFVKALYVDFDFEEAQKKLGEAEDVLRSDFFLVSTTDAFVEAARHLISESYCKIHQRIDIKDLSTRLGLNQDEGEKWIVNLIRDTRVDAKIDYKEGTVIMNHPPQSVYQQVIEKTKGAFFRTQVLRFVRLLYPHD.

The region spanning T256 to Q425 is the PCI domain.

Belongs to the eIF-3 subunit E family. In terms of assembly, component of the eukaryotic translation initiation factor 3 (eIF-3) complex.

It localises to the cytoplasm. Functionally, component of the eukaryotic translation initiation factor 3 (eIF-3) complex, which is involved in protein synthesis of a specialized repertoire of mRNAs and, together with other initiation factors, stimulates binding of mRNA and methionyl-tRNAi to the 40S ribosome. The eIF-3 complex specifically targets and initiates translation of a subset of mRNAs involved in cell proliferation. The protein is Eukaryotic translation initiation factor 3 subunit E (int6) of Neosartorya fischeri (strain ATCC 1020 / DSM 3700 / CBS 544.65 / FGSC A1164 / JCM 1740 / NRRL 181 / WB 181) (Aspergillus fischerianus).